Here is a 577-residue protein sequence, read N- to C-terminus: Urease subunit alpha (577 aa).

The 442-residue stretch at 136 to 577 folds into the Urease domain; the sequence is GAIDCHVHLI…LPMAQRYFLF (442 aa). The Ni(2+) site is built by His-141, His-143, and Lys-224. Lys-224 carries the post-translational modification N6-carboxylysine. His-226 contributes to the substrate binding site. Residues His-253 and His-279 each coordinate Ni(2+). The active-site Proton donor is the His-327. Ni(2+) is bound at residue Asp-367.

Belongs to the metallo-dependent hydrolases superfamily. Urease alpha subunit family. Heterotrimer of UreA (gamma), UreB (beta) and UreC (alpha) subunits. Three heterotrimers associate to form the active enzyme. Requires Ni cation as cofactor. In terms of processing, carboxylation allows a single lysine to coordinate two nickel ions.

The protein resides in the cytoplasm. It carries out the reaction urea + 2 H2O + H(+) = hydrogencarbonate + 2 NH4(+). It functions in the pathway nitrogen metabolism; urea degradation; CO(2) and NH(3) from urea (urease route): step 1/1. This chain is Urease subunit alpha, found in Mycobacterium marinum (strain ATCC BAA-535 / M).